The chain runs to 740 residues: Ribosomal protein S6 kinase alpha-3 (740 aa).

Positions 1–26 (MPLAQLADPWQKMAVESPSDSAENGQ) are disordered. The region spanning 68–327 (FELLKVLGQG…VEEIKRHSFF (260 aa)) is the Protein kinase 1 domain. ATP-binding positions include 74-82 (LGQGSFGKV) and lysine 100. Catalysis depends on aspartate 193, which acts as the Proton acceptor. A Phosphoserine; by PDPK1 modification is found at serine 227. In terms of domain architecture, AGC-kinase C-terminal spans 328 to 397 (STIDWNKLYR…VAITSDDESQ (70 aa)). Threonine 365 is modified (phosphothreonine). Phosphoserine is present on residues serine 369 and serine 375. Position 386 is a phosphoserine; by autocatalysis and MAPKAPK2 (serine 386). Residue serine 415 is modified to Phosphoserine. The 258-residue stretch at 422–679 (YEVKEDIGVG…AALVLRHPWI (258 aa)) folds into the Protein kinase 2 domain. Residues 428 to 436 (IGVGSYSVC) and lysine 451 contribute to the ATP site. Tyrosine 529 bears the Phosphotyrosine; by FGFR3 mark. Aspartate 539 acts as the Proton acceptor in catalysis. Phosphoserine occurs at positions 556 and 715.

It belongs to the protein kinase superfamily. AGC Ser/Thr protein kinase family. S6 kinase subfamily. In terms of assembly, forms a complex with either MAPK1/ERK2 or MAPK3/ERK1 in quiescent cells. Transiently dissociates following mitogenic stimulation. Interacts with NFATC4, ETV1/ER81 and FGFR1. Requires Mg(2+) as cofactor. In terms of processing, activated by phosphorylation at Ser-227 by PDPK1. Autophosphorylated on Ser-386, as part of the activation process. May be phosphorylated at Thr-365 and Ser-369 by MAPK1/ERK2 and MAPK3/ERK1. Can also be activated via phosphorylation at Ser-386 by MAPKAPK2. Post-translationally, N-terminal myristoylation results in an activated kinase in the absence of added growth factors. As to expression, intestine, thymus, lung, heart and brain.

The protein localises to the nucleus. Its subcellular location is the cytoplasm. The enzyme catalyses L-seryl-[protein] + ATP = O-phospho-L-seryl-[protein] + ADP + H(+). It carries out the reaction L-threonyl-[protein] + ATP = O-phospho-L-threonyl-[protein] + ADP + H(+). With respect to regulation, upon extracellular signal or mitogen stimulation, phosphorylated at Thr-577 in the C-terminal kinase domain (CTKD) by MAPK1/ERK2 and MAPK3/ERK1. The activated CTKD then autophosphorylates Ser-386, allowing binding of PDPK1, which in turn phosphorylates Ser-227 in the N-terminal kinase domain (NTDK) leading to the full activation of the protein and subsequent phosphorylation of the substrates by the NTKD. Its function is as follows. Serine/threonine-protein kinase that acts downstream of ERK (MAPK1/ERK2 and MAPK3/ERK1) signaling and mediates mitogenic and stress-induced activation of the transcription factors CREB1, ETV1/ER81 and NR4A1/NUR77, regulates translation through RPS6 and EIF4B phosphorylation, and mediates cellular proliferation, survival, and differentiation by modulating mTOR signaling and repressing pro-apoptotic function of BAD and DAPK1. In fibroblast, is required for EGF-stimulated phosphorylation of CREB1 and histone H3 at 'Ser-10', which results in the subsequent transcriptional activation of several immediate-early genes. In response to mitogenic stimulation (EGF and PMA), phosphorylates and activates NR4A1/NUR77 and ETV1/ER81 transcription factors and the cofactor CREBBP. Upon insulin-derived signal, acts indirectly on the transcription regulation of several genes by phosphorylating GSK3B at 'Ser-9' and inhibiting its activity. Phosphorylates RPS6 in response to serum or EGF via an mTOR-independent mechanism and promotes translation initiation by facilitating assembly of the preinitiation complex. In response to insulin, phosphorylates EIF4B, enhancing EIF4B affinity for the EIF3 complex and stimulating cap-dependent translation. Is involved in the mTOR nutrient-sensing pathway by directly phosphorylating TSC2 at 'Ser-1798', which potently inhibits TSC2 ability to suppress mTOR signaling, and mediates phosphorylation of RPTOR, which regulates mTORC1 activity and may promote rapamycin-sensitive signaling independently of the PI3K/AKT pathway. Mediates cell survival by phosphorylating the pro-apoptotic proteins BAD and DAPK1 and suppressing their pro-apoptotic function. Promotes the survival of hepatic stellate cells by phosphorylating CEBPB in response to the hepatotoxin carbon tetrachloride (CCl4). Is involved in cell cycle regulation by phosphorylating the CDK inhibitor CDKN1B, which promotes CDKN1B association with 14-3-3 proteins and prevents its translocation to the nucleus and inhibition of G1 progression. In LPS-stimulated dendritic cells, is involved in TLR4-induced macropinocytosis, and in myeloma cells, acts as effector of FGFR3-mediated transformation signaling, after direct phosphorylation at Tyr-529 by FGFR3. Negatively regulates EGF-induced MAPK1/3 phosphorylation via phosphorylation of SOS1. Phosphorylates SOS1 at 'Ser-1134' and 'Ser-1161' that create YWHAB and YWHAE binding sites and which contribute to the negative regulation of MAPK1/3 phosphorylation. Phosphorylates EPHA2 at 'Ser-897', the RPS6KA-EPHA2 signaling pathway controls cell migration. Acts as a regulator of osteoblast differentiation by mediating phosphorylation of ATF4, thereby promoting ATF4 transactivation activity. In Mus musculus (Mouse), this protein is Ribosomal protein S6 kinase alpha-3 (Rps6ka3).